Here is a 243-residue protein sequence, read N- to C-terminus: Carboxy-S-adenosyl-L-methionine synthase (243 aa).

S-adenosyl-L-methionine-binding positions include Y40, 65–67 (GSS), 90–91 (DN), 118–119 (DI), N133, and R200.

Belongs to the class I-like SAM-binding methyltransferase superfamily. Cx-SAM synthase family. In terms of assembly, homodimer.

It carries out the reaction prephenate + S-adenosyl-L-methionine = carboxy-S-adenosyl-L-methionine + 3-phenylpyruvate + H2O. Catalyzes the conversion of S-adenosyl-L-methionine (SAM) to carboxy-S-adenosyl-L-methionine (Cx-SAM). The sequence is that of Carboxy-S-adenosyl-L-methionine synthase from Shewanella frigidimarina (strain NCIMB 400).